Consider the following 97-residue polypeptide: Putative membrane protein insertion efficiency factor (97 aa).

The disordered stretch occupies residues 77-97 (VPDAPASPSPSSSCSCKGPHP). Over residues 85-97 (SPSSSCSCKGPHP) the composition is skewed to low complexity.

The protein belongs to the UPF0161 family.

Its subcellular location is the cell inner membrane. Could be involved in insertion of integral membrane proteins into the membrane. The sequence is that of Putative membrane protein insertion efficiency factor from Xanthomonas euvesicatoria pv. vesicatoria (strain 85-10) (Xanthomonas campestris pv. vesicatoria).